We begin with the raw amino-acid sequence, 277 residues long: Thymidylate synthase (277 aa).

Arginine 21 is a binding site for dUMP. Histidine 51 is a (6R)-5,10-methylene-5,6,7,8-tetrahydrofolate binding site. A dUMP-binding site is contributed by 126 to 127; sequence RR. Cysteine 159 functions as the Nucleophile in the catalytic mechanism. DUMP is bound by residues 179-182, asparagine 190, and 220-222; these read RSAD and HLY. Position 182 (aspartate 182) interacts with (6R)-5,10-methylene-5,6,7,8-tetrahydrofolate. Serine 276 lines the (6R)-5,10-methylene-5,6,7,8-tetrahydrofolate pocket.

This sequence belongs to the thymidylate synthase family. Bacterial-type ThyA subfamily. In terms of assembly, homodimer.

The protein resides in the cytoplasm. It carries out the reaction dUMP + (6R)-5,10-methylene-5,6,7,8-tetrahydrofolate = 7,8-dihydrofolate + dTMP. It participates in pyrimidine metabolism; dTTP biosynthesis. Catalyzes the reductive methylation of 2'-deoxyuridine-5'-monophosphate (dUMP) to 2'-deoxythymidine-5'-monophosphate (dTMP) while utilizing 5,10-methylenetetrahydrofolate (mTHF) as the methyl donor and reductant in the reaction, yielding dihydrofolate (DHF) as a by-product. This enzymatic reaction provides an intracellular de novo source of dTMP, an essential precursor for DNA biosynthesis. The protein is Thymidylate synthase of Teredinibacter turnerae (strain ATCC 39867 / T7901).